The primary structure comprises 243 residues: 7-cyano-7-deazaguanine synthase (243 aa).

Residue 18-28 coordinates ATP; that stretch reads FSGGQDSATCL. 4 residues coordinate Zn(2+): Cys206, Cys221, Cys224, and Cys227.

This sequence belongs to the QueC family. Zn(2+) is required as a cofactor.

It catalyses the reaction 7-carboxy-7-deazaguanine + NH4(+) + ATP = 7-cyano-7-deazaguanine + ADP + phosphate + H2O + H(+). It functions in the pathway purine metabolism; 7-cyano-7-deazaguanine biosynthesis. In terms of biological role, catalyzes the ATP-dependent conversion of 7-carboxy-7-deazaguanine (CDG) to 7-cyano-7-deazaguanine (preQ(0)). In Methylorubrum extorquens (strain PA1) (Methylobacterium extorquens), this protein is 7-cyano-7-deazaguanine synthase.